A 439-amino-acid chain; its full sequence is Potassium/proton antiporter CemA (439 aa).

6 consecutive transmembrane segments (helical) span residues I55–L75, I79–N99, Y220–L240, L317–G337, I364–I384, and I399–I419.

Belongs to the CemA family.

Its subcellular location is the plastid. The protein resides in the chloroplast inner membrane. The enzyme catalyses K(+)(in) + H(+)(out) = K(+)(out) + H(+)(in). Its function is as follows. Contributes to K(+)/H(+) antiport activity by supporting proton efflux to control proton extrusion and homeostasis in chloroplasts in a light-dependent manner to modulate photosynthesis. Prevents excessive induction of non-photochemical quenching (NPQ) under continuous-light conditions. Indirectly promotes efficient inorganic carbon uptake into chloroplasts. The protein is Potassium/proton antiporter CemA of Physcomitrium patens (Spreading-leaved earth moss).